The sequence spans 394 residues: Glycerol-1-phosphate dehydrogenase [NAD(P)+] (394 aa).

NAD(+) is bound by residues Asp54, 116 to 120 (GTIHD), and 138 to 141 (TAPS). A substrate-binding site is contributed by Asp143. Ser147 is a binding site for NAD(+). Asp190 is a substrate binding site. Residues Asp190 and His270 each contribute to the Ni(2+) site. Substrate is bound at residue His274. Residue His290 coordinates Ni(2+).

The protein belongs to the glycerol-1-phosphate dehydrogenase family. In terms of assembly, homodimer. It depends on Ni(2+) as a cofactor.

The protein resides in the cytoplasm. The catalysed reaction is sn-glycerol 1-phosphate + NAD(+) = dihydroxyacetone phosphate + NADH + H(+). It catalyses the reaction sn-glycerol 1-phosphate + NADP(+) = dihydroxyacetone phosphate + NADPH + H(+). Its function is as follows. Catalyzes the NAD(P)H-dependent reduction of dihydroxyacetonephosphate (DHAP or glycerone phosphate) to glycerol 1-phosphate (G1P). The G1P thus generated is probably used for the synthesis of phosphoglycerolipids in Gram-positive bacterial species. Prefers NADH over NADPH as coenzyme. Is also able to catalyze the reverse reaction, i.e. the NAD(+)-dependent oxidation of G1P but not of G3P. Does not possess glycerol dehydrogenase activity. In Bacillus subtilis (strain 168), this protein is Glycerol-1-phosphate dehydrogenase [NAD(P)+] (egsA).